We begin with the raw amino-acid sequence, 122 residues long: Large ribosomal subunit protein uL14 (122 aa).

The protein belongs to the universal ribosomal protein uL14 family. In terms of assembly, part of the 50S ribosomal subunit. Forms a cluster with proteins L3 and L19. In the 70S ribosome, L14 and L19 interact and together make contacts with the 16S rRNA in bridges B5 and B8.

In terms of biological role, binds to 23S rRNA. Forms part of two intersubunit bridges in the 70S ribosome. This chain is Large ribosomal subunit protein uL14, found in Francisella tularensis subsp. holarctica (strain LVS).